The following is a 521-amino-acid chain: CD166 antigen (521 aa).

Topologically, residues 1–465 (GSPVFIAFRS…NREQVNHRAT (465 aa)) are extracellular. Residues Asn33, Asn105, Asn244, Asn299, Asn395, Asn418, and Asn437 are each glycosylated (N-linked (GlcNAc...) asparagine). One can recognise an Ig-like V-type 2 domain in the interval 63–172 (PTIVKVFKQP…YGPSGQKTVQ (110 aa)). 4 disulfides stabilise this stretch: Cys95/Cys158, Cys208/Cys251, Cys292/Cys330, and Cys373/Cys423. Ig-like C2-type domains follow at residues 183 to 266 (PTEQ…TAIT), 271 to 347 (DLSL…ESLT), and 354 to 439 (PQIK…LNVS). A helical membrane pass occupies residues 466-487 (LIVGIVLRLLHGALVAGVVYWL). Over 488–521 (YVKKSKTASKHVNKDLGNLEENKKLEQNNHRTEA) the chain is Cytoplasmic. Residues 500–521 (NKDLGNLEENKKLEQNNHRTEA) are disordered. The span at 507 to 521 (EENKKLEQNNHRTEA) shows a compositional bias: basic and acidic residues.

Homodimer. Interacts (via extracellular domain) with CD6 (via extracellular domain). Homodimerization and interaction with CD6 involve the same region and cannot occur simultaneously. The affinity for CD6 is much higher than the affinity for self-association. Interacts (via glycosylated extracellular domain) with LGALS1 and LGALS3. Interaction with LGALS1 or LGALS3 inhibits interaction with CD6. In terms of processing, glycosylated.

Its subcellular location is the cell membrane. It localises to the cell projection. The protein resides in the axon. The protein localises to the dendrite. In terms of biological role, cell adhesion molecule that mediates both heterotypic cell-cell contacts via its interaction with CD6, as well as homotypic cell-cell contacts. Promotes T-cell activation and proliferation via its interactions with CD6. Contributes to the formation and maturation of the immunological synapse via its interactions with CD6. Mediates homotypic interactions with cells that express ALCAM. Mediates attachment of dendritic cells onto endothelial cells via homotypic interaction. Inhibits endothelial cell migration and promotes endothelial tube formation via homotypic interactions. Required for normal organization of the lymph vessel network. Required for normal hematopoietic stem cell engraftment in the bone marrow. Plays a role in hematopoiesis; required for normal numbers of hematopoietic stem cells in bone marrow. Promotes in vitro osteoblast proliferation and differentiation. Promotes neurite extension, axon growth and axon guidance; axons grow preferentially on surfaces that contain ALCAM. Mediates outgrowth and pathfinding for retinal ganglion cell axons. This chain is CD166 antigen (ALCAM), found in Canis lupus familiaris (Dog).